The chain runs to 464 residues: Cysteine--tRNA ligase (464 aa).

Cys-27 is a Zn(2+) binding site. A 'HIGH' region motif is present at residues 29–39 (PTVYDDAHLGH). Zn(2+) is bound by residues Cys-203, His-234, and Glu-238. A 'KMSKS' region motif is present at residues 266-270 (KMSKS). Residue Lys-269 participates in ATP binding.

Belongs to the class-I aminoacyl-tRNA synthetase family. In terms of assembly, monomer. Zn(2+) is required as a cofactor.

It is found in the cytoplasm. The enzyme catalyses tRNA(Cys) + L-cysteine + ATP = L-cysteinyl-tRNA(Cys) + AMP + diphosphate. The protein is Cysteine--tRNA ligase of Campylobacter concisus (strain 13826).